Consider the following 146-residue polypeptide: Putative pre-16S rRNA nuclease (146 aa).

The protein belongs to the YqgF nuclease family.

Its subcellular location is the cytoplasm. Its function is as follows. Could be a nuclease involved in processing of the 5'-end of pre-16S rRNA. This chain is Putative pre-16S rRNA nuclease, found in Mycoplasmopsis pulmonis (strain UAB CTIP) (Mycoplasma pulmonis).